The sequence spans 418 residues: Acyltransferase calJ (418 aa).

Serine 79 acts as the Acyl-ester intermediate in catalysis. Substrate is bound by residues arginine 176 and tyrosine 191.

This sequence belongs to the class-A beta-lactamase family.

It functions in the pathway secondary metabolite biosynthesis. Acyltransferase; part of the gene cluster that mediates the biosynthesis of calbistrin A and related compounds. Calbistrin A is a secondary metabolite with an interesting structure that was recently found to have bioactivity against leukemia cells. It consists of two polyketides linked by an ester bond: a bicyclic decalin containing polyketide and a linear 12 carbon dioic acid structure. The polyketide synthase calA is probably responsible for forming the decalin moiety. Because calA lacks a designated enoylreductase (ER) domain, the required activity is provided by the trans-enoyl reductase calK. Following release from the PKS, calF then probably catalyzes the oxidation and the subsequent Diels Alder cycloisomerization that lead to the formation of the decalin moiety. The decalin polyketide backbone includes two C-methyl groups, at C7 and C11 in backbone, of which the C7 position is probably methylated by the methyltransferase domain of calA. A candidate for adding the methyl group at C11, if not done by CalA, is the cluster methyltransferase calH. Several additional tailoring enzymes within the cluster could be involved in the modification of the decalin polyketide product. Those include the 3 cytochrome P450 monooxygenases CalE, CalG and CalL, of which one might be responsible for the introduction of the extra hydroxyl group attached to the backbone of the decalin moiety, at position C9 in the backbone, that allows for attachment of the linear moiety. One tailoring enzyme activity that is expected to be involved in biosynthesis of calbistrin is an acyltransferase for connecting the two polyketide synthase products, and which could be performed by the cluster acyltransferase calJ. The enzyme responsible for the biosynthesis of the linear moiety, probably a second PKS, has not been identified yet. This Penicillium decumbens protein is Acyltransferase calJ.